The primary structure comprises 305 residues: Porphobilinogen deaminase (305 aa).

Cys240 is subject to S-(dipyrrolylmethanemethyl)cysteine.

It belongs to the HMBS family. In terms of assembly, monomer. Dipyrromethane serves as cofactor.

It carries out the reaction 4 porphobilinogen + H2O = hydroxymethylbilane + 4 NH4(+). The protein operates within porphyrin-containing compound metabolism; protoporphyrin-IX biosynthesis; coproporphyrinogen-III from 5-aminolevulinate: step 2/4. Its function is as follows. Tetrapolymerization of the monopyrrole PBG into the hydroxymethylbilane pre-uroporphyrinogen in several discrete steps. The chain is Porphobilinogen deaminase (hemC) from Xylella fastidiosa (strain 9a5c).